Consider the following 98-residue polypeptide: UPF0235 protein MJ0618 (98 aa).

This sequence belongs to the UPF0235 family.

The polypeptide is UPF0235 protein MJ0618 (Methanocaldococcus jannaschii (strain ATCC 43067 / DSM 2661 / JAL-1 / JCM 10045 / NBRC 100440) (Methanococcus jannaschii)).